The chain runs to 83 residues: RNA-binding protein Hfq (83 aa).

A Sm domain is found at 9–68 (DPYLNALRKERIPVSIFLVNGIKLQGQIESFDQFVILLKNTVSQMVYKHAISTVVPARNV).

This sequence belongs to the Hfq family. In terms of assembly, homohexamer.

Functionally, RNA chaperone that binds small regulatory RNA (sRNAs) and mRNAs to facilitate mRNA translational regulation in response to envelope stress, environmental stress and changes in metabolite concentrations. Also binds with high specificity to tRNAs. In Hahella chejuensis (strain KCTC 2396), this protein is RNA-binding protein Hfq.